We begin with the raw amino-acid sequence, 320 residues long: uncharacterized protein (320 aa).

Helical transmembrane passes span Leu107–Tyr127, Val131–Ser151, Leu169–Ile189, Ile200–Ser220, Ile228–Leu248, Ala260–Ser280, and Thr299–Tyr319.

The protein localises to the cell membrane. This is an uncharacterized protein from Methanocaldococcus jannaschii (strain ATCC 43067 / DSM 2661 / JAL-1 / JCM 10045 / NBRC 100440) (Methanococcus jannaschii).